The sequence spans 644 residues: Karyogamy protein KAR9 (644 aa).

At S496 the chain carries Phosphoserine. Disordered stretches follow at residues 506–534 and 606–644; these read SVPP…PDSF and PNSQ…TPTY. 2 stretches are compositionally biased toward basic and acidic residues: residues 523 to 534 and 634 to 644; these read SRGENEKSPDSF and REGRLDKTPTY.

It localises to the nucleus. It is found in the cytoplasm. Its subcellular location is the cytoskeleton. Involved in karyogamy. Component of a cortical adaptor complex that orients cytoplasmic microtubules. It may be involved in anchoring cytoplasmic microtubules to the cell cortex. The polypeptide is Karyogamy protein KAR9 (KAR9) (Saccharomyces cerevisiae (strain ATCC 204508 / S288c) (Baker's yeast)).